A 332-amino-acid chain; its full sequence is Ketol-acid reductoisomerase (NADP(+)) (332 aa).

Residues 1–182 enclose the KARI N-terminal Rossmann domain; it reads MAVIYYDKDC…GSNRAGILET (182 aa). Residues 25–28 and 83–86 contribute to the NADP(+) site; these read YGAQ and DTSQ. Residue histidine 108 is part of the active site. Glycine 134 lines the NADP(+) pocket. The region spanning 183–328 is the KARI C-terminal knotted domain; sequence TFAEETETDL…AELRSMMSWL (146 aa). Aspartate 191, glutamate 195, glutamate 227, and glutamate 231 together coordinate Mg(2+). Serine 252 serves as a coordination point for substrate.

The protein belongs to the ketol-acid reductoisomerase family. It depends on Mg(2+) as a cofactor.

It carries out the reaction (2R)-2,3-dihydroxy-3-methylbutanoate + NADP(+) = (2S)-2-acetolactate + NADPH + H(+). The enzyme catalyses (2R,3R)-2,3-dihydroxy-3-methylpentanoate + NADP(+) = (S)-2-ethyl-2-hydroxy-3-oxobutanoate + NADPH + H(+). It functions in the pathway amino-acid biosynthesis; L-isoleucine biosynthesis; L-isoleucine from 2-oxobutanoate: step 2/4. Its pathway is amino-acid biosynthesis; L-valine biosynthesis; L-valine from pyruvate: step 2/4. In terms of biological role, involved in the biosynthesis of branched-chain amino acids (BCAA). Catalyzes an alkyl-migration followed by a ketol-acid reduction of (S)-2-acetolactate (S2AL) to yield (R)-2,3-dihydroxy-isovalerate. In the isomerase reaction, S2AL is rearranged via a Mg-dependent methyl migration to produce 3-hydroxy-3-methyl-2-ketobutyrate (HMKB). In the reductase reaction, this 2-ketoacid undergoes a metal-dependent reduction by NADPH to yield (R)-2,3-dihydroxy-isovalerate. In Dehalococcoides mccartyi (strain ATCC BAA-2100 / JCM 16839 / KCTC 5957 / BAV1), this protein is Ketol-acid reductoisomerase (NADP(+)).